Here is a 303-residue protein sequence, read N- to C-terminus: Sulfotransferase 6B1 (303 aa).

Position 65–70 (65–70 (KCGSNW)) interacts with 3'-phosphoadenylyl sulfate. The active-site Proton acceptor is histidine 118. 3'-phosphoadenylyl sulfate contacts are provided by residues arginine 140, serine 148, tyrosine 203, 237–242 (STFQAM), and 259–261 (RKG).

Belongs to the sulfotransferase 1 family.

It is found in the cytoplasm. The protein localises to the cytosol. The catalysed reaction is thyroxine + 3'-phosphoadenylyl sulfate = thyroxine sulfate + adenosine 3',5'-bisphosphate + H(+). Functionally, sulfotransferase that utilizes 3'-phospho-5'-adenylyl sulfate (PAPS) as sulfonate donor to catalyze the sulfate conjugation of thyroxine. Involved in the metabolism of thyroxine. The polypeptide is Sulfotransferase 6B1 (SULT6B1) (Pan troglodytes (Chimpanzee)).